Reading from the N-terminus, the 311-residue chain is Pyrimidine-specific ribonucleoside hydrolase RihA (311 aa).

H240 is an active-site residue.

The protein belongs to the IUNH family. RihA subfamily.

Hydrolyzes with equal efficiency cytidine or uridine to ribose and cytosine or uracil, respectively. This is Pyrimidine-specific ribonucleoside hydrolase RihA from Escherichia coli O17:K52:H18 (strain UMN026 / ExPEC).